Reading from the N-terminus, the 314-residue chain is DNA-directed RNA polymerase subunit alpha (314 aa).

An alpha N-terminal domain (alpha-NTD) region spans residues 1–228 (MIEIEKPRIE…EHLNIFVSLT (228 aa)). Residues 245 to 314 (KEKVLEMSIE…DLGLGLRKED (70 aa)) are alpha C-terminal domain (alpha-CTD).

Belongs to the RNA polymerase alpha chain family. In terms of assembly, homodimer. The RNAP catalytic core consists of 2 alpha, 1 beta, 1 beta' and 1 omega subunit. When a sigma factor is associated with the core the holoenzyme is formed, which can initiate transcription.

It carries out the reaction RNA(n) + a ribonucleoside 5'-triphosphate = RNA(n+1) + diphosphate. DNA-dependent RNA polymerase catalyzes the transcription of DNA into RNA using the four ribonucleoside triphosphates as substrates. The polypeptide is DNA-directed RNA polymerase subunit alpha (Staphylococcus epidermidis (strain ATCC 35984 / DSM 28319 / BCRC 17069 / CCUG 31568 / BM 3577 / RP62A)).